A 308-amino-acid polypeptide reads, in one-letter code: MLPPYFLFKEMTDTQYIGRFAPSPSGELHFGSLIAALGSYLQARARQGRWLVRIEDIDPPREVPGAAETILRQLEHYGLHWDGDVLWQSQRHDAYREALAWLHEQGLSYYCTCTRARIQSIGGIYDGHCRVLHHGPDNAAVRIRQQHPVTQFTDQLRGIIHADEKLAREDFIIHRRDGLFAYNLAVVVDDHFQGVTEIVRGADLIEPTVRQISLYQLFGWKVPDYIHLPLALNPQGAKLSKQNHAPALPKGDPRPVLIAALQFLGQQAEAHWQDFSVEQILQSAVKNWRLTAVPESAIVNSTFSNASC.

Residues 19–23 (RFAPS) and Glu55 contribute to the L-glutamate site. The 'HIGH' region signature appears at 22–32 (PSPSGELHFGS). Residues Cys111, Cys113, Tyr125, and Cys129 each contribute to the Zn(2+) site. 2 residues coordinate L-glutamate: Tyr182 and Arg200. A 'KMSKS' region motif is present at residues 238–242 (KLSKQ). Lys241 is a binding site for ATP.

It belongs to the class-I aminoacyl-tRNA synthetase family. GluQ subfamily. Zn(2+) serves as cofactor.

In terms of biological role, catalyzes the tRNA-independent activation of glutamate in presence of ATP and the subsequent transfer of glutamate onto a tRNA(Asp). Glutamate is transferred on the 2-amino-5-(4,5-dihydroxy-2-cyclopenten-1-yl) moiety of the queuosine in the wobble position of the QUC anticodon. The sequence is that of Glutamyl-Q tRNA(Asp) synthetase from Escherichia coli (strain K12 / MC4100 / BW2952).